The primary structure comprises 364 residues: Cobalt-precorrin-5B C(1)-methyltransferase (364 aa).

This sequence belongs to the CbiD family.

The catalysed reaction is Co-precorrin-5B + S-adenosyl-L-methionine = Co-precorrin-6A + S-adenosyl-L-homocysteine. The protein operates within cofactor biosynthesis; adenosylcobalamin biosynthesis; cob(II)yrinate a,c-diamide from sirohydrochlorin (anaerobic route): step 6/10. Its function is as follows. Catalyzes the methylation of C-1 in cobalt-precorrin-5B to form cobalt-precorrin-6A. This chain is Cobalt-precorrin-5B C(1)-methyltransferase, found in Pseudomonas putida (strain ATCC 47054 / DSM 6125 / CFBP 8728 / NCIMB 11950 / KT2440).